The following is a 576-amino-acid chain: MADLLGIVAIVFFYVLILVVGIWAGRKSKSSKELESEAGAATEEVMLAGRNIGTLVGIFTMTATWVGGAYINGTAEALYNGGLLGCQAPVGYAISLVMGGLLFAKKMREEGYITMLDPFQHKYGQRIGGLMYVPALLGETFWTAAILSALGATLSVILGIDMNASVTLSACIAVFYTFTGGYYAVAYTDVVQLFCIFVGLWVCVPAAMVHDGAKDISRNAGDWIGEIGGFKETSLWIDCMLLLVFGGIPWQVYFQRVLSSKTAHGAQTLSFVAGVGCILMAIPPALIGAIARNTDWRMTDYSPWNNGTKVESIPPDKRNMVVPLVFQYLTPRWVAFIGLGAVSAAVMSSADSSVLSAASMFAHNIWKLTIRPHASEKEVIIVMRIAIICVGIMATIMALTIQSIYGLWYLCADLVYVILFPQLLCVVYMPRSNTYGSLAGYAVGLVLRLIGGEPLVSLPAFFHYPMYTDGVQYFPFRTTAMLSSMATIYIVSIQSEKLFKSGRLSPEWDVMGCVVNIPIDHVPLPSDVSFAVSSETLNMKAPNGTPAPVHPNQQPSDENTLLHPYSDQSYYSTNSN.

A helical membrane pass occupies residues 6-26 (GIVAIVFFYVLILVVGIWAGR). The Cytoplasmic portion of the chain corresponds to 27 to 51 (KSKSSKELESEAGAATEEVMLAGRN). The helical transmembrane segment at 52–72 (IGTLVGIFTMTATWVGGAYIN) threads the bilayer. Topologically, residues 73–82 (GTAEALYNGG) are extracellular. The chain crosses the membrane as a helical span at residues 83-103 (LLGCQAPVGYAISLVMGGLLF). Residues 104–126 (AKKMREEGYITMLDPFQHKYGQR) lie on the Cytoplasmic side of the membrane. A helical transmembrane segment spans residues 127-147 (IGGLMYVPALLGETFWTAAIL). At 148–165 (SALGATLSVILGIDMNAS) the chain is on the extracellular side. Residues 166–186 (VTLSACIAVFYTFTGGYYAVA) form a helical membrane-spanning segment. The Cytoplasmic segment spans residues 187–192 (YTDVVQ). The helical transmembrane segment at 193 to 213 (LFCIFVGLWVCVPAAMVHDGA) threads the bilayer. The Extracellular portion of the chain corresponds to 214–233 (KDISRNAGDWIGEIGGFKET). A helical transmembrane segment spans residues 234 to 254 (SLWIDCMLLLVFGGIPWQVYF). At 255-270 (QRVLSSKTAHGAQTLS) the chain is on the cytoplasmic side. A helical transmembrane segment spans residues 271 to 291 (FVAGVGCILMAIPPALIGAIA). At 292-319 (RNTDWRMTDYSPWNNGTKVESIPPDKRN) the chain is on the extracellular side. The N-linked (GlcNAc...) asparagine glycan is linked to Asn306. The helical transmembrane segment at 320–340 (MVVPLVFQYLTPRWVAFIGLG) threads the bilayer. The Cytoplasmic segment spans residues 341 to 378 (AVSAAVMSSADSSVLSAASMFAHNIWKLTIRPHASEKE). A helical transmembrane segment spans residues 379 to 399 (VIIVMRIAIICVGIMATIMAL). Topologically, residues 400–408 (TIQSIYGLW) are extracellular. Residues 409 to 429 (YLCADLVYVILFPQLLCVVYM) traverse the membrane as a helical segment. At 430–437 (PRSNTYGS) the chain is on the cytoplasmic side. A helical transmembrane segment spans residues 438–458 (LAGYAVGLVLRLIGGEPLVSL). The Extracellular portion of the chain corresponds to 459–478 (PAFFHYPMYTDGVQYFPFRT). Residues 479–499 (TAMLSSMATIYIVSIQSEKLF) form a helical membrane-spanning segment. Residues 500 to 576 (KSGRLSPEWD…DQSYYSTNSN (77 aa)) lie on the Cytoplasmic side of the membrane. The disordered stretch occupies residues 541–576 (APNGTPAPVHPNQQPSDENTLLHPYSDQSYYSTNSN). Polar residues predominate over residues 566 to 576 (SDQSYYSTNSN).

The protein belongs to the sodium:solute symporter (SSF) (TC 2.A.21) family. Detected in the nervous system, including the nerve ring and cholinergic motor neurons of the ventral nerve cord.

It localises to the membrane. In terms of biological role, imports choline from the extracellular space to the neuron with high affinity. Choline uptake is the rate-limiting step in acetylcholine synthesis. Sodium ion and chloride ion dependent. The sequence is that of High-affinity choline transporter 1 (cho-1) from Caenorhabditis elegans.